A 431-amino-acid chain; its full sequence is Galactose-3-O-sulfotransferase 3 (431 aa).

Residues 1 to 19 (MPPILQRLQQATKMMSRRK) are Cytoplasmic-facing. The chain crosses the membrane as a helical; Signal-anchor for type II membrane protein span at residues 20–40 (ILLLVLGCSTVSLLIHQGAQL). The Lumenal segment spans residues 41 to 431 (SWYPKLFPLS…RVLPRGPQGP (391 aa)). Residues Asn91, Asn110, Asn177, and Asn302 are each glycosylated (N-linked (GlcNAc...) asparagine). Residues 399-431 (QKRRGGARARPEPVLDNPPPRPIRVLPRGPQGP) form a disordered region.

It belongs to the galactose-3-O-sulfotransferase family. Requires Mg(2+) as cofactor. As to expression, highly expressed in thyroid, brain, kidney, heart and spinal cord.

It is found in the golgi apparatus. It localises to the golgi stack membrane. It functions in the pathway protein modification; carbohydrate sulfation. Its function is as follows. Transfers a sulfate to position 3 of non-reducing beta-galactosyl residues in N-glycans and core2-branched O-glycans. Has high activity towards Gal-beta-1,4-GlcNAc, Gal-beta-1,4(Fuc-alpha-1,3)GlcNAc and lower activity towards Gal-beta-1,3(Fuc-alpha-1,4)GlcNAc. This Homo sapiens (Human) protein is Galactose-3-O-sulfotransferase 3 (GAL3ST3).